The chain runs to 740 residues: Probable RNA-dependent RNA polymerase 1 (740 aa).

It belongs to the RdRP family.

It carries out the reaction RNA(n) + a ribonucleoside 5'-triphosphate = RNA(n+1) + diphosphate. Probably involved in the RNA silencing pathway and required for the generation of small interfering RNAs (siRNAs). This Oryza sativa subsp. japonica (Rice) protein is Probable RNA-dependent RNA polymerase 1 (RDR1).